Consider the following 236-residue polypeptide: Ubiquinone biosynthesis O-methyltransferase (236 aa).

The S-adenosyl-L-methionine site is built by arginine 36, glycine 60, aspartate 81, and leucine 123.

It belongs to the methyltransferase superfamily. UbiG/COQ3 family.

The catalysed reaction is a 3-demethylubiquinol + S-adenosyl-L-methionine = a ubiquinol + S-adenosyl-L-homocysteine + H(+). It carries out the reaction a 3-(all-trans-polyprenyl)benzene-1,2-diol + S-adenosyl-L-methionine = a 2-methoxy-6-(all-trans-polyprenyl)phenol + S-adenosyl-L-homocysteine + H(+). Its pathway is cofactor biosynthesis; ubiquinone biosynthesis. O-methyltransferase that catalyzes the 2 O-methylation steps in the ubiquinone biosynthetic pathway. This is Ubiquinone biosynthesis O-methyltransferase from Rickettsia canadensis (strain McKiel).